The sequence spans 174 residues: RNA pyrophosphohydrolase (174 aa).

A Nudix hydrolase domain is found at 6–149 (GYRPNVGIVI…KRDVYRRALK (144 aa)). Residues 38–59 (GGIDEGETPEQAMYRELYEEVG) carry the Nudix box motif.

Belongs to the Nudix hydrolase family. RppH subfamily. A divalent metal cation serves as cofactor.

Functionally, accelerates the degradation of transcripts by removing pyrophosphate from the 5'-end of triphosphorylated RNA, leading to a more labile monophosphorylated state that can stimulate subsequent ribonuclease cleavage. The protein is RNA pyrophosphohydrolase of Photobacterium profundum (strain SS9).